A 308-amino-acid chain; its full sequence is MTNNNSNSNNNQTISNLSAGLKSVNLADQQQNEVNLNLLQQQLQNEATTQQSQSRISQFFQNQPTEGYTLFSHRSAPNGFKVAIILSELNLPFNTIFLDFNNGEQRAPEFVTINPNARVPALIDHFNENTSIWESGAIILYLVSKYLKDNGECALWSDNLIEQSQISSWLFFQTSGHAPMIGQALHFRYFHSCPVPSAVERYTDEVRRVYGVIEMALAERREALIMDLDVENAAAYSAGTTPLSQSRYFDYPVWLVGDRATVADLSFVPWNNVVDRIGINLKVEFPEVYKWTKYMMRRPAVIRALRGD.

The region spanning 66–150 (EGYTLFSHRS…YLVSKYLKDN (85 aa)) is the GST N-terminal domain. The region spanning 159–308 (NLIEQSQISS…PAVIRALRGD (150 aa)) is the GST C-terminal domain.

Belongs to the GST superfamily. Homodimer.

In terms of biological role, plays an important role in the cellular response to the nitrogen source. URE2 gene plays a major part in the repression of GLN1 and GDH2 genes by glutamine, and is required for the inactivation of glutamine synthetase. URE2 gene product may catalytically inactivate GLN3 in response to an increase in the intracellular concentration of glutamine. This is Protein URE2 (URE2) from Debaryomyces hansenii (strain ATCC 36239 / CBS 767 / BCRC 21394 / JCM 1990 / NBRC 0083 / IGC 2968) (Yeast).